Reading from the N-terminus, the 77-residue chain is Cell division topological specificity factor (77 aa).

It belongs to the MinE family.

In terms of biological role, prevents the cell division inhibition by proteins MinC and MinD at internal division sites while permitting inhibition at polar sites. This ensures cell division at the proper site by restricting the formation of a division septum at the midpoint of the long axis of the cell. This chain is Cell division topological specificity factor, found in Helicobacter pylori (strain P12).